Here is a 291-residue protein sequence, read N- to C-terminus: ATP synthase gamma chain (291 aa).

It belongs to the ATPase gamma chain family. In terms of assembly, F-type ATPases have 2 components, CF(1) - the catalytic core - and CF(0) - the membrane proton channel. CF(1) has five subunits: alpha(3), beta(3), gamma(1), delta(1), epsilon(1). CF(0) has three main subunits: a, b and c.

The protein resides in the cell membrane. Produces ATP from ADP in the presence of a proton gradient across the membrane. The gamma chain is believed to be important in regulating ATPase activity and the flow of protons through the CF(0) complex. This is ATP synthase gamma chain from Streptococcus uberis (strain ATCC BAA-854 / 0140J).